The following is a 250-amino-acid chain: Endomucin (250 aa).

The N-terminal stretch at 1-20 (MRLLQVTALFFLLSNSLCRG) is a signal peptide. Low complexity-rich tracts occupy residues 24–38 (KALTETSTTKASATT) and 45–60 (TNKSTGGTPPKGTTNS). 2 disordered regions span residues 24–83 (KALT…ETTT) and 105–153 (NAVS…LTTA). N46, N115, and N119 each carry an N-linked (GlcNAc...) asparagine glycan. Composition is skewed to polar residues over residues 105–135 (NAVSTLSSPQNKTENQSSIRTTEISGTNQLP) and 143–153 (TETPSASLTTA). The helical transmembrane segment at 180-200 (VILPVVIALIVITVLVFTLVG) threads the bilayer. A disordered region spans residues 210-250 (PGTPESGNDQPQSDKESVKLLTVKTISHESGEHSAQGKAKN). S226 is subject to Phosphoserine.

Post-translationally, highly O-glycosylated. Sialic acid-rich glycoprotein.

Its subcellular location is the membrane. Functionally, endothelial sialomucin, also called endomucin or mucin-like sialoglycoprotein, which interferes with the assembly of focal adhesion complexes and inhibits interaction between cells and the extracellular matrix. This Rattus norvegicus (Rat) protein is Endomucin (Emcn).